A 220-amino-acid chain; its full sequence is MLHLIIADSELELVPKELQNHPSIISHAKRRFKKPEEILLDSTYHHTALKSLKDGERRGRPDIVHLCLINALESILNKEGKLRVYVHTRNNEVIYIKPETRLPRNYNRFVGLMESLFKNRVIPKDLALLRIENKTLSEIIGDIGPDAVFIMHENGVLMSPQSFGRKLNEYISPAVIVGGFPHGDFLSVLEGEKISIYKEPLMAWSVVNEVLINYEGSLLW.

S-adenosyl-L-methionine is bound by residues Gly178, Gly183, and 196 to 201 (IYKEPL).

This sequence belongs to the class IV-like SAM-binding methyltransferase superfamily. RNA methyltransferase NEP1 family. As to quaternary structure, homodimer.

It carries out the reaction a pseudouridine in rRNA + S-adenosyl-L-methionine = an N(1)-methylpseudouridine in rRNA + S-adenosyl-L-homocysteine + H(+). Methyltransferase involved in ribosomal biogenesis. Specifically catalyzes the N1-methylation of the pseudouridine corresponding to position 914 in M.jannaschii 16S rRNA. The sequence is that of Ribosomal RNA small subunit methyltransferase Nep1 from Thermococcus sibiricus (strain DSM 12597 / MM 739).